Reading from the N-terminus, the 369-residue chain is Putative gustatory receptor 39b (369 aa).

Topologically, residues 1–32 (MLYSFHPYLKYFALLGLVPWSESCAQSKFVQK) are cytoplasmic. The helical transmembrane segment at 33–53 (VYSAILIILNAVHFGISIYFP) threads the bilayer. At 54-59 (QSAELF) the chain is on the extracellular side. Residues 60 to 80 (LSLMVNVIVFVARIVCVTVII) traverse the membrane as a helical segment. Topologically, residues 81-122 (LQVMVHYDDYFRFCREMKYLGLRLQCELKIHVGRLKWQSYAK) are cytoplasmic. A helical transmembrane segment spans residues 123-143 (ILALGIGFLVTVLPSIYVALS). Topologically, residues 144–147 (GSLL) are extracellular. A helical membrane pass occupies residues 148–168 (YFWSSLLSILIIRMQFVLVLL). The Cytoplasmic portion of the chain corresponds to 169 to 224 (NVELLGHHVSLLGIRLQNVLECHLMGANCTLDGNANRLCSLEFLLALKQSHMQLHY). A helical membrane pass occupies residues 225–245 (LFTHFNDLFGWSILGTYVVLF). Over 246–265 (SDSTVNIYWTQQVLVEVYEY) the chain is Extracellular. The chain crosses the membrane as a helical span at residues 266 to 286 (KYLYATFSVFVPSFFNILVFC). Residues 287–348 (RCGEFCQRQS…EGFMSTDNSL (62 aa)) are Cytoplasmic-facing. The helical transmembrane segment at 349-368 (LMSILAAKVTYLIVLMQFSS) threads the bilayer. V369 is a topological domain (extracellular).

It belongs to the insect chemoreceptor superfamily. Gustatory receptor (GR) family. Gr2a subfamily. As to expression, expressed in the adult labellar chemosensory neurons and in abdominal ganglions. In larvae, is expressed in neurons of the dorsal and posterior pharyngeal sense organs.

Its subcellular location is the cell membrane. Probable gustatory receptor which mediates acceptance or avoidance behavior, depending on its substrates. Has also atypical sensory function in organ not limited to conventional taste sensing like abdominal ganglions. The sequence is that of Putative gustatory receptor 39b (Gr39b) from Drosophila melanogaster (Fruit fly).